A 337-amino-acid chain; its full sequence is Probable cytosolic iron-sulfur protein assembly protein CIAO1 homolog (337 aa).

WD repeat units follow at residues 15–54, 65–104, 109–148, 154–193, 199–238, 253–292, and 301–337; these read DDTSRVWMTCWHHGGRILASCGDDKAVRVWSLVGEPDSKM, SHTRAVRSVAFSNDGKCLVSASFDASVVVYQQEDGEFAEV, GHESEVKCAVFSKSDEFLATCSRDKSVWFWQQDEDEDFSV, PHTQDVKQVAWHPTEDLLVSCSYDSSIRFYRFDGEDWVTQ, CHVGTVWSIAFDTEGHRLVTVGEDHCIQLFVRENIGSKSA, NTRWPLYSVAWNSTNDVIATGGGDCKIRLFKISSTPESPV, and RHELDVNHVAWNPNPKFSNLLTSASDDGTIRLWELEI.

This sequence belongs to the WD repeat CIA1 family.

Functionally, essential component of the cytosolic iron-sulfur (Fe/S) protein assembly machinery. Required for the maturation of extramitochondrial Fe/S proteins. The polypeptide is Probable cytosolic iron-sulfur protein assembly protein CIAO1 homolog (Caenorhabditis elegans).